The primary structure comprises 116 residues: MKDKKVARLRRAKRTRLKIRELGEVRLCVHRTPRHIYAQVISAAGDQVLASASTVEKDLRADATGNADAATKVGQIIAQRAKEAGIERVAFDRSGFKYHGRVKALADAARENGLEF.

This sequence belongs to the universal ribosomal protein uL18 family. Part of the 50S ribosomal subunit; part of the 5S rRNA/L5/L18/L25 subcomplex. Contacts the 5S and 23S rRNAs.

In terms of biological role, this is one of the proteins that bind and probably mediate the attachment of the 5S RNA into the large ribosomal subunit, where it forms part of the central protuberance. The polypeptide is Large ribosomal subunit protein uL18 (Alcanivorax borkumensis (strain ATCC 700651 / DSM 11573 / NCIMB 13689 / SK2)).